The chain runs to 78 residues: Small ribosomal subunit protein bS18 (78 aa).

Belongs to the bacterial ribosomal protein bS18 family. In terms of assembly, part of the 30S ribosomal subunit. Forms a tight heterodimer with protein bS6.

Its function is as follows. Binds as a heterodimer with protein bS6 to the central domain of the 16S rRNA, where it helps stabilize the platform of the 30S subunit. This chain is Small ribosomal subunit protein bS18, found in Clostridium novyi (strain NT).